The following is a 715-amino-acid chain: Inducible lysine decarboxylase (715 aa).

Lys367 carries the N6-(pyridoxal phosphate)lysine modification.

It belongs to the Orn/Lys/Arg decarboxylase class-I family. In terms of assembly, homodecamer. Interacts with RavA. Pyridoxal 5'-phosphate serves as cofactor.

Its subcellular location is the cytoplasm. The catalysed reaction is L-lysine + H(+) = cadaverine + CO2. In Escherichia coli O157:H7, this protein is Inducible lysine decarboxylase (cadA).